The chain runs to 188 residues: dCTP deaminase (188 aa).

DCTP is bound by residues 111–116 (KSTYAR), 135–137 (TLE), Q156, Y170, and Q180. E137 acts as the Proton donor/acceptor in catalysis.

Belongs to the dCTP deaminase family. As to quaternary structure, homotrimer.

The enzyme catalyses dCTP + H2O + H(+) = dUTP + NH4(+). It functions in the pathway pyrimidine metabolism; dUMP biosynthesis; dUMP from dCTP (dUTP route): step 1/2. Its function is as follows. Catalyzes the deamination of dCTP to dUTP. This chain is dCTP deaminase, found in Cupriavidus metallidurans (strain ATCC 43123 / DSM 2839 / NBRC 102507 / CH34) (Ralstonia metallidurans).